The following is a 321-amino-acid chain: Phospho-N-acetylmuramoyl-pentapeptide-transferase (321 aa).

10 helical membrane-spanning segments follow: residues 6–26 (MLIP…LFIG), 53–73 (TMGG…VGIW), 77–97 (LTLS…LGFY), 121–141 (ILGA…HTLW), 144–164 (IIGN…WLVG), 175–195 (LDGL…IIAA), 200–220 (TDVL…LMFN), 226–246 (IFMG…VAIL), 251–271 (WSLL…ILQV), and 301–321 (IDLT…AFFL).

Belongs to the glycosyltransferase 4 family. MraY subfamily. Mg(2+) serves as cofactor.

The protein resides in the cell membrane. It carries out the reaction UDP-N-acetyl-alpha-D-muramoyl-L-alanyl-gamma-D-glutamyl-L-lysyl-D-alanyl-D-alanine + di-trans,octa-cis-undecaprenyl phosphate = Mur2Ac(oyl-L-Ala-gamma-D-Glu-L-Lys-D-Ala-D-Ala)-di-trans,octa-cis-undecaprenyl diphosphate + UMP. The protein operates within cell wall biogenesis; peptidoglycan biosynthesis. Catalyzes the initial step of the lipid cycle reactions in the biosynthesis of the cell wall peptidoglycan: transfers peptidoglycan precursor phospho-MurNAc-pentapeptide from UDP-MurNAc-pentapeptide onto the lipid carrier undecaprenyl phosphate, yielding undecaprenyl-pyrophosphoryl-MurNAc-pentapeptide, known as lipid I. This is Phospho-N-acetylmuramoyl-pentapeptide-transferase from Lacticaseibacillus paracasei (strain ATCC 334 / BCRC 17002 / CCUG 31169 / CIP 107868 / KCTC 3260 / NRRL B-441) (Lactobacillus paracasei).